The primary structure comprises 261 residues: Putative ketoacyl reductase (261 aa).

NADP(+)-binding residues include T15, S16, I18, R38, G39, D63, V64, N90, Y157, K161, V190, and T192. The active-site Proton acceptor is Y157.

This sequence belongs to the short-chain dehydrogenases/reductases (SDR) family. As to quaternary structure, homotetramer.

Its pathway is antibiotic biosynthesis; actinorhodin biosynthesis. The protein is Putative ketoacyl reductase (actIII) of Streptomyces coelicolor (strain ATCC BAA-471 / A3(2) / M145).